Here is a 409-residue protein sequence, read N- to C-terminus: Arginine deiminase (409 aa).

Cys-399 serves as the catalytic Amidino-cysteine intermediate.

Belongs to the arginine deiminase family.

Its subcellular location is the cytoplasm. The catalysed reaction is L-arginine + H2O = L-citrulline + NH4(+). Its pathway is amino-acid degradation; L-arginine degradation via ADI pathway; carbamoyl phosphate from L-arginine: step 1/2. This is Arginine deiminase from Streptococcus sanguinis (strain SK36).